The following is a 132-amino-acid chain: Protein p15 (132 aa).

In terms of biological role, may play a role in infectivity. The sequence is that of Protein p15 from Panicum mosaic virus (strain United States/Kansas 109S) (PMV).